A 416-amino-acid polypeptide reads, in one-letter code: MAAALRSAGVLLRDRLLYGGSRACQPRRCQSGAATAAAATETAQRARSPKPQAQPGNRKPRTGILMLNMGGPETVEEVQDFLQRLFLDQDLMTLPVQDKLGPFIAKRRTPKIQEQYRRIGGGSPIKMWTSKQGEGMVKLLDELSPHTAPHKYYIGFRYVHPLTEEAIEEMERDGLERAVAFTQYPQYSCSTTGSSLNAIYRYYNEVGRKPTMKWSTIDRWPTHPLLIQCFADHILKELDHFPPEKRREVVILFSAHSLPMSVVNRGDPYPQEVGATVQRVMDKLGYSNPYRLVWQSKVGPMPWLGPQTDEAIKGLCKRGRKNILLVPIAFTSDHIETLYELDIEYSQVLASECGLENIRRAESLNGNPLFSKALADLVHSHLQSKERCSTQLTLSCPLCVNPTCRETKSFFTSQQL.

A mitochondrion-targeting transit peptide spans 1 to 47 (MAAALRSAGVLLRDRLLYGGSRACQPRRCQSGAATAAAATETAQRAR). A disordered region spans residues 41–62 (ETAQRARSPKPQAQPGNRKPRT). Residue Lys-50 is modified to N6-acetyllysine. The protoporphyrin IX site is built by Arg-108, Tyr-116, and Ser-123. At Lys-131 the chain carries N6-succinyllysine. Residue Cys-189 coordinates [2Fe-2S] cluster. His-223 is an active-site residue. An N6-acetyllysine; alternate modification is found at Lys-283. Lys-283 is subject to N6-succinyllysine; alternate. Residue Asp-376 is part of the active site. Cys-396, Cys-399, and Cys-404 together coordinate [2Fe-2S] cluster. At Lys-408 the chain carries N6-acetyllysine; alternate. Lys-408 is modified (N6-succinyllysine; alternate).

It belongs to the ferrochelatase family. Homodimer. Homotetramer. Interaction with PGRMC1; the interaction results in decreased FECH activity. Interacts with ABCB10 and SLC25A37; this interaction forms an oligomeric complex. Forms a complex with ABCB7 and ABCB10, where a dimeric FECH bridges ABCB7 and ABCB10 homodimers; this complex may be required for cellular iron homeostasis, mitochondrial function and heme biosynthesis. Interacts with ABCB7 and ABCB10. [2Fe-2S] cluster is required as a cofactor.

The protein resides in the mitochondrion inner membrane. The enzyme catalyses heme b + 2 H(+) = protoporphyrin IX + Fe(2+). Its pathway is porphyrin-containing compound metabolism; protoheme biosynthesis; protoheme from protoporphyrin-IX: step 1/1. In terms of biological role, catalyzes the ferrous insertion into protoporphyrin IX and participates in the terminal step in the heme biosynthetic pathway. The sequence is that of Ferrochelatase, mitochondrial from Bos taurus (Bovine).